A 301-amino-acid chain; its full sequence is Glycerol-3-phosphate dehydrogenase [NAD(P)+] (301 aa).

Residues Trp-13, Arg-33, and Lys-78 each coordinate NADPH. Positions 78 and 106 each coordinate sn-glycerol 3-phosphate. An NADPH-binding site is contributed by Ala-110. Sn-glycerol 3-phosphate is bound by residues Lys-161, Asp-214, Ser-224, Arg-225, and Asn-226. Catalysis depends on Lys-161, which acts as the Proton acceptor. Arg-225 contributes to the NADPH binding site. Position 251 (Glu-251) interacts with NADPH.

The protein belongs to the NAD-dependent glycerol-3-phosphate dehydrogenase family.

The protein localises to the cytoplasm. The enzyme catalyses sn-glycerol 3-phosphate + NAD(+) = dihydroxyacetone phosphate + NADH + H(+). The catalysed reaction is sn-glycerol 3-phosphate + NADP(+) = dihydroxyacetone phosphate + NADPH + H(+). Its pathway is membrane lipid metabolism; glycerophospholipid metabolism. Functionally, catalyzes the reduction of the glycolytic intermediate dihydroxyacetone phosphate (DHAP) to sn-glycerol 3-phosphate (G3P), the key precursor for phospholipid synthesis. In Synechococcus sp. (strain RCC307), this protein is Glycerol-3-phosphate dehydrogenase [NAD(P)+].